A 1176-amino-acid chain; its full sequence is Chromosome partition protein Smc (1176 aa).

An ATP-binding site is contributed by 32–39; that stretch reads PNGCGKSN. Positions 169–506 form a coiled coil; it reads GVSRYKERRR…VKLQEDVQKQ (338 aa). The SMC hinge domain maps to 521 to 623; sequence LGRLWQKLHI…TAPDLGQALA (103 aa). 2 coiled-coil regions span residues 653–947 and 987–1024; these read DSEQ…LAAM and ERKE…LQAT.

The protein belongs to the SMC family. Homodimer.

It is found in the cytoplasm. Functionally, required for chromosome condensation and partitioning. This is Chromosome partition protein Smc from Bordetella petrii (strain ATCC BAA-461 / DSM 12804 / CCUG 43448).